The sequence spans 309 residues: Putative S-adenosyl-L-methionine-dependent methyltransferase Mflv_0743 (309 aa).

S-adenosyl-L-methionine-binding positions include Asp-134 and 163–164 (DL).

It belongs to the UPF0677 family.

Exhibits S-adenosyl-L-methionine-dependent methyltransferase activity. This chain is Putative S-adenosyl-L-methionine-dependent methyltransferase Mflv_0743, found in Mycolicibacterium gilvum (strain PYR-GCK) (Mycobacterium gilvum (strain PYR-GCK)).